We begin with the raw amino-acid sequence, 315 residues long: Protein translocase subunit SecF (315 aa).

6 helical membrane-spanning segments follow: residues 12-32 (AWIV…ISWA), 136-156 (ALFR…IIYL), 166-186 (VFAI…FAIF), 188-208 (LVGG…IIGF), 247-267 (SINT…FGGD), and 271-291 (FFAL…IFMA).

Belongs to the SecD/SecF family. SecF subfamily. Forms a complex with SecD. Part of the essential Sec protein translocation apparatus which comprises SecA, SecYEG and auxiliary proteins SecDF. Other proteins may also be involved.

It localises to the cell inner membrane. Part of the Sec protein translocase complex. Interacts with the SecYEG preprotein conducting channel. SecDF uses the proton motive force (PMF) to complete protein translocation after the ATP-dependent function of SecA. Its function is as follows. Probably participates in protein translocation into and across both the cytoplasmic and thylakoid membranes in cyanobacterial cells. This chain is Protein translocase subunit SecF, found in Synechocystis sp. (strain ATCC 27184 / PCC 6803 / Kazusa).